We begin with the raw amino-acid sequence, 455 residues long: MPNPDTSTMTPREIVQELDRHIVGQHDAKRAVAIALRNRWRRMQLPEELRNEVMPKNILMIGPTGVGKTEIARRLATLANAPFVKVEATRFTEVGYVGKDVEQIIRDLADTSVKLYREQAKVRVRNQAEERAEDCILDALLPRRATGIGFDPEAARNEPSSQENDTRIKFRRMLRNGELDEREIELEVAVNASMDIMTPPGMEEMGQQLRQMFSNLGSGKSQKRKLTIKAARPLLIEEEAGKLVNEDDVRTAAIKACEQHGIVFIDEIDKVAKRGEAGSNGGDVSREGVQRDLLPLVEGSNVSTKYGTVKTDHILFIASGAFHLAKPSDLIPELQGRFPIRVELTALTKADFVRILTEPKAALIKQYEALLQTEGVSLTFAQDAVDRLAEIAAQVNERQENIGARRLHTVLERLLDVLSYEAPDRDGQSVTVDAAYVDAQLGELVQDPDLSRYIL.

ATP contacts are provided by residues Val-23, 65 to 70 (GVGKTE), Asp-266, Glu-333, and Arg-405.

Belongs to the ClpX chaperone family. HslU subfamily. As to quaternary structure, a double ring-shaped homohexamer of HslV is capped on each side by a ring-shaped HslU homohexamer. The assembly of the HslU/HslV complex is dependent on binding of ATP.

It localises to the cytoplasm. In terms of biological role, ATPase subunit of a proteasome-like degradation complex; this subunit has chaperone activity. The binding of ATP and its subsequent hydrolysis by HslU are essential for unfolding of protein substrates subsequently hydrolyzed by HslV. HslU recognizes the N-terminal part of its protein substrates and unfolds these before they are guided to HslV for hydrolysis. In Xanthomonas oryzae pv. oryzae (strain MAFF 311018), this protein is ATP-dependent protease ATPase subunit HslU.